The primary structure comprises 350 residues: Mitochondrial glycine transporter (350 aa).

3 Solcar repeats span residues Ser23 to Cys107, Leu134 to Asn218, and Ser250 to Lys334. The next 6 membrane-spanning stretches (helical) occupy residues Phe29 to Gln54, Gly82 to Ile108, Leu140 to Glu165, Gly193 to Lys216, Val254 to Leu280, and Gly309 to Val327.

This sequence belongs to the mitochondrial carrier (TC 2.A.29) family. SLC25A38 subfamily.

The protein resides in the mitochondrion inner membrane. The enzyme catalyses glycine(in) = glycine(out). Mitochondrial glycine transporter that imports glycine into the mitochondrial matrix. Plays an important role in providing glycine for the first enzymatic step in heme biosynthesis, the condensation of glycine with succinyl-CoA to produce 5-aminolevulinate (ALA) in the mitochondrial matrix. This is Mitochondrial glycine transporter from Ajellomyces capsulatus (strain NAm1 / WU24) (Darling's disease fungus).